The sequence spans 332 residues: UBA domain-containing protein Mud1 (332 aa).

Residue Asp127 is part of the active site. A disordered region spans residues 246–298; the sequence is GLGIEPASKASASSPNPQSGTRLGTKESVAPNNEGSSNPPSLVNPPTDPGLNS. Residues 251-264 are compositionally biased toward low complexity; sequence PASKASASSPNPQS. The segment covering 275-286 has biased composition (polar residues); that stretch reads APNNEGSSNPPS. Residues 291-332 form the UBA domain; it reads PTDPGLNSKIAQLVSMGFDPLEAAQALDAANGDLDVAASFLL.

The protein belongs to the DDI1 family. In terms of assembly, homodimer. Interacts (via UBA domain) with polyubiquitin (polyUb) chains (via Lys-48-linked polyUbs). Has weak binding affinity for monoubiquitin. According to another report, has no affinity for monoubiquitin.

It is found in the cytoplasm. It localises to the cell membrane. Its function is as follows. Recognizes and binds polyubiquitin chains. Acts as a linker between the 19S proteasome and polyubiquitinated proteins via UBA domain interactions with ubiquitin for their subsequent degradation. Aspartic protease. Appears to act as negative regulator of constitutive exocytosis. May act at the level of secretory vesicle docking and fusion as a competitive inhibitor of SNARE assembly. Required for S-phase checkpoint control. This Schizosaccharomyces pombe (strain 972 / ATCC 24843) (Fission yeast) protein is UBA domain-containing protein Mud1.